Here is a 934-residue protein sequence, read N- to C-terminus: Intimin (934 aa).

The N-terminal stretch at 1–39 is a signal peptide; the sequence is MITHGCYTRTRHKHKLKKTLIMLSAGLGLFFYVNQNSFA. A peptidoglycan-binding region spans residues 40–153; it reads NGENYFKLGS…KLTKMSPDVT (114 aa). The sufficient for homodimerization stretch occupies residues 40-153; sequence NGENYFKLGS…KLTKMSPDVT (114 aa). The required for periplasmic localization stretch occupies residues 40 to 212; it reads NGENYFKLGS…LQAWLQHYGT (173 aa). The 50-residue stretch at 63–112 folds into the LysM domain; the sequence is LFYTLKTGETVADLSKSQDINLSTIWSLNKHLYSSESEMMKAAPGQQIIL. The segment at 210-411 is inverse autotransporter; that stretch reads YGTAEVNLQS…LYSMQFRYQF (202 aa). The interval 402–411 is signature sequence for beta-barrel assembly machinery (BAM), which recognizes the unfolded beta-barrel in the periplasm; the sequence is LYSMQFRYQF. Residues 437–449 form a minimum linker residues necessary for formation of a heat-modifiable beta-barrel region; that stretch reads LVQRNNNIILEYK. Big-1 domains lie at 560–653 and 660–753; these read VTDF…VIFF and ITEI…VTFF. Residues 747-934 are intimin receptor Tir-binding; that stretch reads ATEVTFFDEL…TPNVYAVCVE (188 aa). The region spanning 787–833 is the BIG2 domain; that stretch reads ASGGDGTYSWYSENTSIATVDASGKVTLNGKGSVVIKATSGDKQTVS. A disulfide bond links cysteine 858 and cysteine 932.

Belongs to the intimin/invasin family. Homodimer. Interacts with Tir.

The protein resides in the cell outer membrane. An inverse autotransporter. Adhesin, which mediates attachment to the human intestine epithelial cells. Necessary for the production of attaching and effacing lesions on infected human tissue culture cells. Anchored to the outer membrane by binding to peptidoglycan (PGN) via its periplasmic domain, thus helping in receptor interactions during host invasion. PGN-binding may also aid in resisting mechanical and chemical stress during transit of the bacterium through the gastrointestinal tract of the host. This is Intimin from Escherichia coli O157:H7.